A 297-amino-acid polypeptide reads, in one-letter code: MGSIRTRLLWLCLLMLLALLHKSGSQDLTCMVHPSRVDWTQTFNGTCLNFSGLGLSLPRSPLQASHAQVLDLSKNGLQVLPGAFFDKLEKLQTLIVTHNQLDSVDRSLALRCDLELKADCSCGLASWYALRQNCSGQQQLLCLHPATEAPRNLSTFLQVSCPPSWGPGTIGALVAGTISLAVAVSGSVLAWRLLRRRRRASEHSLSKAQMSPHDIPKPVTDFLPRYSSRRPGPKAPDSPPSRFTMDYENVFIGQPAEDCSWSAARNSPSGDSDCYMNYRSVDQDSQPVYCNLESLGR.

Residues 1-25 (MGSIRTRLLWLCLLMLLALLHKSGS) form the signal peptide. Residues 26-169 (QDLTCMVHPS…SCPPSWGPGT (144 aa)) lie on the Extracellular side of the membrane. 2 N-linked (GlcNAc...) asparagine glycosylation sites follow: N44 and N49. 2 LRR repeats span residues 66 to 89 (HAQV…DKLE) and 90 to 113 (KLQT…LRCD). 2 N-linked (GlcNAc...) asparagine glycosylation sites follow: N133 and N152. The helical transmembrane segment at 170–190 (IGALVAGTISLAVAVSGSVLA) threads the bilayer. At 191-297 (WRLLRRRRRA…VYCNLESLGR (107 aa)) the chain is on the cytoplasmic side. A disordered region spans residues 202 to 244 (EHSLSKAQMSPHDIPKPVTDFLPRYSSRRPGPKAPDSPPSRFT). Residues S211, S238, and S267 each carry the phosphoserine modification. Y289 is modified (phosphotyrosine).

As to quaternary structure, interacts with RIGI. Interacts with SQSTM1. Interacts with p65/RELA; this interaction promotes the degradation of RELA through autophagy.

The protein resides in the membrane. It localises to the cytoplasm. Functionally, plays a role in the inhibition of RLR-mediated type I interferon signaling pathway by targeting RIGI for autophagic degradation. Interacts specifically with ISG15-associated RIGI to promote interaction between RIGI and the autophagic cargo receptor p62/SQSTM1 to mediate RIGI degradation via selective autophagy. Plays also a role in the inhibition of NF-kappa-B signaling pathway and inflammatory response by promoting the degradation of p65/RELA. This Mus musculus (Mouse) protein is Leucine-rich repeat-containing protein 25 (Lrrc25).